Consider the following 159-residue polypeptide: RNA pyrophosphohydrolase (159 aa).

One can recognise a Nudix hydrolase domain in the interval 6 to 149; sequence GFRPNVGIIL…KREVYRRALK (144 aa). The Nudix box motif lies at 38 to 59; it reads GGINPDETPEDALYRELNEEVG.

This sequence belongs to the Nudix hydrolase family. RppH subfamily. The cofactor is a divalent metal cation.

Functionally, accelerates the degradation of transcripts by removing pyrophosphate from the 5'-end of triphosphorylated RNA, leading to a more labile monophosphorylated state that can stimulate subsequent ribonuclease cleavage. The polypeptide is RNA pyrophosphohydrolase (Pseudomonas putida (strain ATCC 700007 / DSM 6899 / JCM 31910 / BCRC 17059 / LMG 24140 / F1)).